We begin with the raw amino-acid sequence, 306 residues long: Shugoshin (306 aa).

The stretch at 28-75 (NFKSTNESLIKKNLQLKQQLSQCTKALEKLRNENIALREQNQELIDAT) forms a coiled coil. Disordered regions lie at residues 122 to 196 (PEPS…GRRS) and 223 to 306 (IAPS…DTFF). Positions 133–161 (PKMECNLEKLDESPVRNFPRSDYEEENKS) are enriched in basic and acidic residues. Over residues 167 to 181 (NGPSSSSSMTQNLEN) the composition is skewed to polar residues. The segment covering 230–241 (GGPPKKAPPRKA) has biased composition (pro residues).

It belongs to the shugoshin family.

The protein localises to the nucleus. Its subcellular location is the chromosome. It localises to the centromere. In terms of biological role, plays a central role in chromosome cohesion during cell division by preventing premature dissociation of cohesin complex from centromeres after prophase, when most of cohesin complex dissociates from chromosomes arms. In Caenorhabditis briggsae, this protein is Shugoshin (sgo-1).